Here is a 187-residue protein sequence, read N- to C-terminus: CRISPR system Cmr subunit Cmr1-2 (187 aa).

This sequence belongs to the CRISPR system Cmr1 family. Part of the type III-B Cmr ribonucleoprotein (RNP) complex. This is an elongated RNP with Cmr2 and Cmr3 as the base, with Cmr4 and Cmr5 forming a helical core along the mature crRNA (39 or 45 nt in length), while the complex is capped by Cmr6 and Cmr1. The 5' end of the crRNA is bound to Cmr2 and Cmr3, while Cmr6 and a Cmr1 subunit (Cmr1-1 or Cmr1-2) cap the 3' end of the crRNA. The target RNA lies antiparallel to the crRNA, with its 5' end near Cmr1 and Cmr6 and its 3' end near Cmr2 and Cmr3; major target cleavage occurs nears the junction of Cmr1/Cmr6 and Cmr4/Cmr, with minor cleavage occurring at 6 nt intervals which coincide with the proposed spacing of Cmr4 subunits.

Its subcellular location is the cytoplasm. CRISPR (clustered regularly interspaced short palindromic repeat), is an adaptive immune system that provides protection against mobile genetic elements (viruses, transposable elements and conjugative plasmids). CRISPR clusters contain sequences complementary to antecedent mobile elements and target invading nucleic acids. CRISPR clusters are transcribed and processed into CRISPR RNA (crRNA), formerly called psiRNA (prokaryotic silencing) in this organism. Part of the Cmr ribonucleoprotein complex which has divalent cation-dependent endoribonuclease activity specific for ssRNA complementary to the crRNA (target RNA), generating 5' hydroxy- and 3' phosphate or 2'-3' cyclic phosphate termini. Cmr4 is probably the subunit that cleaves target RNA. Cmr complex does not cleave ssDNA complementary to the crRNA. Cleavage of invading RNA is guided by the crRNA; substrate cleavage occurs a fixed distance (14 nt) from the 3' end of the crRNA. In vitro reconstitution shows Cmr1-2 and Cmr5 are not absolutely necessary for target cleavage. This Pyrococcus furiosus (strain ATCC 43587 / DSM 3638 / JCM 8422 / Vc1) protein is CRISPR system Cmr subunit Cmr1-2.